We begin with the raw amino-acid sequence, 253 residues long: Tryptophan synthase alpha chain (253 aa).

Residues glutamate 47 and aspartate 58 each act as proton acceptor in the active site.

This sequence belongs to the TrpA family. In terms of assembly, tetramer of two alpha and two beta chains.

It carries out the reaction (1S,2R)-1-C-(indol-3-yl)glycerol 3-phosphate + L-serine = D-glyceraldehyde 3-phosphate + L-tryptophan + H2O. It participates in amino-acid biosynthesis; L-tryptophan biosynthesis; L-tryptophan from chorismate: step 5/5. Its function is as follows. The alpha subunit is responsible for the aldol cleavage of indoleglycerol phosphate to indole and glyceraldehyde 3-phosphate. This Lactococcus lactis subsp. lactis (strain IL1403) (Streptococcus lactis) protein is Tryptophan synthase alpha chain.